We begin with the raw amino-acid sequence, 180 residues long: CASP-like protein XL3 (180 aa).

Topologically, residues 1–7 are cytoplasmic; it reads MELSIQK. Residues 8-28 form a helical membrane-spanning segment; it reads IEALIRLSTIVMLVLTACLIG. Residues 29 to 49 lie on the Extracellular side of the membrane; it reads LDSQTKVIFYVQKKASFKDLR. A helical transmembrane segment spans residues 50–70; sequence ALVGLLYITSLAAAYNLLQLC. At 71 to 98 the chain is on the cytoplasmic side; that stretch reads CSSFSASYKGTSLQSYAYLAWLRYILDQ. Residues 99–119 form a helical membrane-spanning segment; the sequence is AVVYAVFAGNLAALEHSFLVL. Over 120–140 the chain is Extracellular; that stretch reads TGEENFQWLKWCNKYTRFCTQ. The chain crosses the membrane as a helical span at residues 141–161; sequence IGGSLLCGFVASLLMFSIASI. At 162-180 the chain is on the cytoplasmic side; it reads SAFNLFRQYSPTKFMHLKL.

Belongs to the Casparian strip membrane proteins (CASP) family. As to quaternary structure, homodimer and heterodimers.

The protein localises to the cell membrane. This chain is CASP-like protein XL3 (XL3), found in Gossypium hirsutum (Upland cotton).